Here is an 843-residue protein sequence, read N- to C-terminus: Protein P (843 aa).

The tract at residues 1–177 (MPLSYQHFRK…FCGSPYSWEQ (177 aa)) is terminal protein domain (TP). Residues 178–346 (ELQHGRLVFQ…YCLSHIVNLL (169 aa)) are spacer. The interval 347–690 (EDWGPCTEHG…YMNLYPVARQ (344 aa)) is polymerase/reverse transcriptase domain (RT). Residues 357–600 (EHHIRIPRTP…YSLNFMGYVI (244 aa)) form the Reverse transcriptase domain. The Mg(2+) site is built by Asp429, Asp551, and Asp552.

Belongs to the hepadnaviridae P protein family.

The enzyme catalyses DNA(n) + a 2'-deoxyribonucleoside 5'-triphosphate = DNA(n+1) + diphosphate. It carries out the reaction Endonucleolytic cleavage to 5'-phosphomonoester.. Its activity is regulated as follows. Activated by host HSP70 and HSP40 in vitro to be able to bind the epsilon loop of the pgRNA. Because deletion of the RNase H region renders the protein partly chaperone-independent, the chaperones may be needed indirectly to relieve occlusion of the RNA-binding site by this domain. Inhibited by several reverse-transcriptase inhibitors: Lamivudine, Adefovir and Entecavir. Functionally, multifunctional enzyme that converts the viral RNA genome into dsDNA in viral cytoplasmic capsids. This enzyme displays a DNA polymerase activity that can copy either DNA or RNA templates, and a ribonuclease H (RNase H) activity that cleaves the RNA strand of RNA-DNA heteroduplexes in a partially processive 3'- to 5'-endonucleasic mode. Neo-synthesized pregenomic RNA (pgRNA) are encapsidated together with the P protein, and reverse-transcribed inside the nucleocapsid. Initiation of reverse-transcription occurs first by binding the epsilon loop on the pgRNA genome, and is initiated by protein priming, thereby the 5'-end of (-)DNA is covalently linked to P protein. Partial (+)DNA is synthesized from the (-)DNA template and generates the relaxed circular DNA (RC-DNA) genome. After budding and infection, the RC-DNA migrates in the nucleus, and is converted into a plasmid-like covalently closed circular DNA (cccDNA). The activity of P protein does not seem to be necessary for cccDNA generation, and is presumably released from (+)DNA by host nuclear DNA repair machinery. This Homo sapiens (Human) protein is Protein P.